The sequence spans 527 residues: Peptide chain release factor 3 (527 aa).

Residues 9–277 enclose the tr-type G domain; that stretch reads AKRRTFAIIS…AVVNWAPKPL (269 aa). GTP contacts are provided by residues 18–25, 86–90, and 140–143; these read SHPDAGKT, DTPGH, and NKLD.

The protein belongs to the TRAFAC class translation factor GTPase superfamily. Classic translation factor GTPase family. PrfC subfamily.

Its subcellular location is the cytoplasm. Its function is as follows. Increases the formation of ribosomal termination complexes and stimulates activities of RF-1 and RF-2. It binds guanine nucleotides and has strong preference for UGA stop codons. It may interact directly with the ribosome. The stimulation of RF-1 and RF-2 is significantly reduced by GTP and GDP, but not by GMP. This chain is Peptide chain release factor 3, found in Pseudomonas syringae pv. syringae (strain B728a).